We begin with the raw amino-acid sequence, 436 residues long: Citrate synthase (436 aa).

Active-site residues include His-311 and Asp-370.

The protein belongs to the citrate synthase family. As to quaternary structure, homohexamer.

The catalysed reaction is oxaloacetate + acetyl-CoA + H2O = citrate + CoA + H(+). It functions in the pathway carbohydrate metabolism; tricarboxylic acid cycle; isocitrate from oxaloacetate: step 1/2. Allosterically inhibited by NADH. In Rickettsia prowazekii (strain Madrid E), this protein is Citrate synthase (gltA).